The chain runs to 810 residues: DNA replication licensing factor mcm-6 (810 aa).

Residues 346 to 553 (IEKNIVDSLF…VTDYAIARRI (208 aa)) form the MCM domain. 6 residues coordinate ATP: S400, T401, A402, K403, S404, and N505. Positions 529–532 (SRFD) match the Arginine finger motif. ADP is bound by residues R622 and E625. Residues 685-705 (KENQGGDDDMEHDGEKDETAK) form a disordered region.

The protein belongs to the MCM family. As to quaternary structure, component of the mcm2-7 complex. The complex forms a toroidal hexameric ring with the proposed subunit order mcm2-mcm6-mcm4-mcm7-mcm3-mcm5 (By simililarity).

The protein resides in the nucleus. It carries out the reaction ATP + H2O = ADP + phosphate + H(+). Functionally, acts as a component of the MCM2-7 complex (MCM complex) which is the replicative helicase essential for 'once per cell cycle' DNA replication initiation and elongation in eukaryotic cells. Core component of CDC45-MCM-GINS (CMG) helicase, the molecular machine that unwinds template DNA during replication, and around which the replisome is built. The active ATPase sites in the MCM2-7 ring are formed through the interaction surfaces of two neighboring subunits such that a critical structure of a conserved arginine finger motif is provided in trans relative to the ATP-binding site of the Walker A box of the adjacent subunit. The six ATPase active sites, however, are likely to contribute differentially to the complex helicase activity. The protein is DNA replication licensing factor mcm-6 of Caenorhabditis briggsae.